A 214-amino-acid polypeptide reads, in one-letter code: Adenylate kinase (214 aa).

An ATP-binding site is contributed by 10–15 (GAGKGT). The interval 30 to 59 (STGDMLRAAVKAGTPLGVKAQEIMIQGGLV) is NMP. AMP-binding positions include T31, R36, 57–59 (GLV), 85–88 (GFPR), and Q92. An LID region spans residues 126-163 (GRRSCSSCGKGYHLVFDPPLRAGVCDVCGSGLVQRADD). R127 lines the ATP pocket. Zn(2+) contacts are provided by C130, C133, C150, and C153. Residues R160 and R171 each coordinate AMP. G199 serves as a coordination point for ATP.

Belongs to the adenylate kinase family. Monomer.

It is found in the cytoplasm. The enzyme catalyses AMP + ATP = 2 ADP. Its pathway is purine metabolism; AMP biosynthesis via salvage pathway; AMP from ADP: step 1/1. In terms of biological role, catalyzes the reversible transfer of the terminal phosphate group between ATP and AMP. Plays an important role in cellular energy homeostasis and in adenine nucleotide metabolism. The polypeptide is Adenylate kinase (Trichlorobacter lovleyi (strain ATCC BAA-1151 / DSM 17278 / SZ) (Geobacter lovleyi)).